The chain runs to 358 residues: Homoserine O-acetyltransferase (358 aa).

The AB hydrolase-1 domain maps to 52–337; sequence NVILICHALT…DEPYGHDAFL (286 aa). Ser-148 acts as the Nucleophile in catalysis. Position 217 (Arg-217) interacts with substrate. Residues Asp-304 and His-333 contribute to the active site. Asp-334 contributes to the substrate binding site.

It belongs to the AB hydrolase superfamily. MetX family. Homodimer.

It localises to the cytoplasm. It carries out the reaction L-homoserine + acetyl-CoA = O-acetyl-L-homoserine + CoA. Its pathway is amino-acid biosynthesis; L-methionine biosynthesis via de novo pathway; O-acetyl-L-homoserine from L-homoserine: step 1/1. In terms of biological role, transfers an acetyl group from acetyl-CoA to L-homoserine, forming acetyl-L-homoserine. The protein is Homoserine O-acetyltransferase of Chlorobium luteolum (strain DSM 273 / BCRC 81028 / 2530) (Pelodictyon luteolum).